Here is a 928-residue protein sequence, read N- to C-terminus: MORC family CW-type zinc finger protein 4 (928 aa).

The segment at R417–R469 adopts a CW-type zinc-finger fold. Positions 426, 429, 450, and 461 each coordinate Zn(2+). 4 disordered regions span residues L474–L510, N527–K546, A599–Q649, and R718–T766. Basic and acidic residues predominate over residues A485–K497. 3 stretches are compositionally biased toward basic and acidic residues: residues E626 to E636, K739 to S748, and T756 to T766. The stretch at K758–S867 forms a coiled coil.

It localises to the nucleus. Its function is as follows. Histone methylation reader which binds to non-methylated (H3K4me0), monomethylated (H3K4me1), dimethylated (H3K4me2) and trimethylated (H3K4me3) 'Lys-4' on histone H3. The order of binding preference is H3K4me3 &gt; H3K4me2 &gt; H3K4me1 &gt; H3K4me0. The polypeptide is MORC family CW-type zinc finger protein 4 (Morc4) (Mus musculus (Mouse)).